A 186-amino-acid polypeptide reads, in one-letter code: Peptidyl-tRNA hydrolase (186 aa).

Y13 contacts tRNA. The Proton acceptor role is filled by H18. TRNA is bound by residues Y59, N61, and N107.

This sequence belongs to the PTH family. As to quaternary structure, monomer.

The protein localises to the cytoplasm. It carries out the reaction an N-acyl-L-alpha-aminoacyl-tRNA + H2O = an N-acyl-L-amino acid + a tRNA + H(+). Its function is as follows. Hydrolyzes ribosome-free peptidyl-tRNAs (with 1 or more amino acids incorporated), which drop off the ribosome during protein synthesis, or as a result of ribosome stalling. Functionally, catalyzes the release of premature peptidyl moieties from peptidyl-tRNA molecules trapped in stalled 50S ribosomal subunits, and thus maintains levels of free tRNAs and 50S ribosomes. This is Peptidyl-tRNA hydrolase from Thermotoga maritima (strain ATCC 43589 / DSM 3109 / JCM 10099 / NBRC 100826 / MSB8).